Consider the following 85-residue polypeptide: Actobindin homolog (85 aa).

The region spanning 35-52 is the WH2 domain; the sequence is DRNELLSGIKEGKELKKA.

In terms of biological role, is able to bind two actin monomers at high concentrations of G-actin. The polypeptide is Actobindin homolog (Entamoeba histolytica).